A 181-amino-acid polypeptide reads, in one-letter code: Protein OPG005 (181 aa).

In Vaccinia virus (strain Copenhagen) (VACV), this protein is Protein OPG005 (OPG005).